The sequence spans 120 residues: NAD(P)H-quinone oxidoreductase subunit 3, chloroplastic (120 aa).

A run of 3 helical transmembrane segments spans residues 9 to 29, 64 to 84, and 88 to 108; these read IFWA…LISG, MFAL…PWAM, and VLGV…ILGL.

This sequence belongs to the complex I subunit 3 family. As to quaternary structure, NDH is composed of at least 16 different subunits, 5 of which are encoded in the nucleus.

It localises to the plastid. Its subcellular location is the chloroplast thylakoid membrane. It catalyses the reaction a plastoquinone + NADH + (n+1) H(+)(in) = a plastoquinol + NAD(+) + n H(+)(out). The enzyme catalyses a plastoquinone + NADPH + (n+1) H(+)(in) = a plastoquinol + NADP(+) + n H(+)(out). In terms of biological role, NDH shuttles electrons from NAD(P)H:plastoquinone, via FMN and iron-sulfur (Fe-S) centers, to quinones in the photosynthetic chain and possibly in a chloroplast respiratory chain. The immediate electron acceptor for the enzyme in this species is believed to be plastoquinone. Couples the redox reaction to proton translocation, and thus conserves the redox energy in a proton gradient. The sequence is that of NAD(P)H-quinone oxidoreductase subunit 3, chloroplastic from Aethionema cordifolium (Lebanon stonecress).